Reading from the N-terminus, the 471-residue chain is 3-isopropylmalate dehydratase large subunit (471 aa).

Residues cysteine 347, cysteine 407, and cysteine 410 each coordinate [4Fe-4S] cluster. Positions 417 to 443 (TLQPGERSASTSNRNFEGRQGKGGRTH) are disordered.

The protein belongs to the aconitase/IPM isomerase family. LeuC type 1 subfamily. As to quaternary structure, heterodimer of LeuC and LeuD. The cofactor is [4Fe-4S] cluster.

It catalyses the reaction (2R,3S)-3-isopropylmalate = (2S)-2-isopropylmalate. It participates in amino-acid biosynthesis; L-leucine biosynthesis; L-leucine from 3-methyl-2-oxobutanoate: step 2/4. Catalyzes the isomerization between 2-isopropylmalate and 3-isopropylmalate, via the formation of 2-isopropylmaleate. This Nocardioides sp. (strain ATCC BAA-499 / JS614) protein is 3-isopropylmalate dehydratase large subunit.